We begin with the raw amino-acid sequence, 440 residues long: Trigger factor (440 aa).

In terms of domain architecture, PPIase FKBP-type spans G162–P247.

It belongs to the FKBP-type PPIase family. Tig subfamily.

It is found in the cytoplasm. The catalysed reaction is [protein]-peptidylproline (omega=180) = [protein]-peptidylproline (omega=0). Functionally, involved in protein export. Acts as a chaperone by maintaining the newly synthesized protein in an open conformation. Functions as a peptidyl-prolyl cis-trans isomerase. In Hamiltonella defensa subsp. Acyrthosiphon pisum (strain 5AT), this protein is Trigger factor.